Consider the following 354-residue polypeptide: MSLRSHLSRLLRTQVHSVRKKSVHSVAVIGAPFSQGQKRKGVEYGPAAVRXAGLMKRLSDLGCHLKDFGDLNFTPVPKDDLYNNLIVNPRSVGLANQELAEVVSRAVSGGYSCVTVGGDHSLAIGTISGHARHCPDLGVIWVDAHADINTPLTTSSGNLHGQPVSFLLRELQDKVPQLPGFSWIKPCISSPSIVYIGLRDVDPPEHFILKNYDIQYFSMRDIDRLGIQKVMEQTFDLLIGKRQRPIHLSFDIDAFDPTLAPATGTPVVGGLTYREGIYITEEIHSTGLLSALDLVEVNPRLAVSEEEAKATASLAVDVIASSFGQTREGGHIVYDQLPTPSSPDESESEERVRI.

The transit peptide at 1–22 (MSLRSHLSRLLRTQVHSVRKKS) directs the protein to the mitochondrion. Mn(2+)-binding residues include H120, D143, H145, and D147. Substrate contacts are provided by residues 145 to 149 (HADIN), 156 to 158 (SGN), and D202. Mn(2+)-binding residues include D251 and D253. Substrate-binding residues include T265 and E296. The interval 332-354 (IVYDQLPTPSSPDESESEERVRI) is disordered.

Belongs to the arginase family. As to quaternary structure, homotrimer. It depends on Mn(2+) as a cofactor.

It is found in the mitochondrion. The catalysed reaction is L-arginine + H2O = urea + L-ornithine. It functions in the pathway nitrogen metabolism; urea cycle; L-ornithine and urea from L-arginine: step 1/1. Its function is as follows. May play a role in the regulation of extra-urea cycle arginine metabolism and also in down-regulation of nitric oxide synthesis. Extrahepatic arginase functions to regulate L-arginine bioavailability to nitric oxid synthase (NOS). Arginine metabolism is a critical regulator of innate and adaptive immune responses. Seems to be involved in negative regulation of the survival capacity of activated T cells. May suppress inflammation-related signaling in asthmatic airway epithelium. May play a role in promoting prenatal immune suppression. Regulates RPS6KB1 signaling, which promotes endothelial cell senescence and inflammation and implicates NOS3/eNOS dysfunction. Can inhibit endothelial autophagy independently of its enzymatic activity implicating mTORC2 signaling. Involved in vascular smooth muscle cell senescence and apoptosis independently of its enzymatic activity. The protein is Arginase-2, mitochondrial (ARG2) of Bos taurus (Bovine).